Consider the following 912-residue polypeptide: uncharacterized protein (912 aa).

Basic and acidic residues-rich tracts occupy residues 20–32 (IERL…AEPA) and 39–67 (HEYE…EDKT). The interval 20 to 91 (IERLREQGRA…KPTLPQPETD (72 aa)) is disordered. The span at 68–77 (RHKKLKHRSR) shows a compositional bias: basic residues.

This is an uncharacterized protein from Penicillium chrysogenum virus (isolate Caston/2003) (PcV).